The sequence spans 1000 residues: Sop-2-related protein 1 (1000 aa).

3 disordered regions span residues 355–374 (KIMKQEEEEEKARKHGQYQQ), 379–422 (HQQH…GPSE), and 466–509 (APSE…VARG). Residues 390 to 404 (SSSSVPSTSSPSCSS) show a composition bias toward low complexity. Residues 406–415 (ANRKEMETVR) show a composition bias toward basic and acidic residues. A compositionally biased stretch (low complexity) spans 489–502 (GPSQQQQIPGTSQQ). The segment at 633-720 (REQILPQQYM…LNTSSVQPSE (88 aa)) is RNA-binding. Positions 948 to 1000 (HRMHSQRPPSMGNSSTSSEASSTSPTNAATATSSPASNRPTTSTAQPPTLNPT) are disordered. A compositionally biased stretch (low complexity) spans 960 to 992 (NSSTSSEASSTSPTNAATATSSPASNRPTTSTA).

Binds through its N-terminal region to the N-terminal region of sop-2.

Its subcellular location is the nucleus. In terms of biological role, acts synergistically with sop-2 to maintain the transcriptionally repressive state of homeotic genes throughout development. Not required to initiate repression, but to maintain it during later stages of development. Also required to repress expression of other genes. Binds RNA in a sequence-independent manner. This Caenorhabditis elegans protein is Sop-2-related protein 1 (sor-1).